Consider the following 314-residue polypeptide: Probable tRNA pseudouridine synthase B (314 aa).

Residues 1 to 10 (MATRGRHRSR) show a composition bias toward basic residues. The segment at 1–30 (MATRGRHRSRTSGTSSEPMTLRAPPDERDL) is disordered. Residue aspartate 72 is the Nucleophile of the active site. In terms of domain architecture, PUA spans 237-314 (LPRVTIAPSA…LVVELDRMLV (78 aa)).

This sequence belongs to the pseudouridine synthase TruB family. Type 2 subfamily.

It carries out the reaction uridine(55) in tRNA = pseudouridine(55) in tRNA. Its function is as follows. Could be responsible for synthesis of pseudouridine from uracil-55 in the psi GC loop of transfer RNAs. This Haloarcula marismortui (strain ATCC 43049 / DSM 3752 / JCM 8966 / VKM B-1809) (Halobacterium marismortui) protein is Probable tRNA pseudouridine synthase B.